The chain runs to 1167 residues: Pesticidal crystal protein Cry1Ja (1167 aa).

It belongs to the delta endotoxin family.

Promotes colloidosmotic lysis by binding to the midgut epithelial cells of many lepidopteran larvae. This chain is Pesticidal crystal protein Cry1Ja (cry1Ja), found in Bacillus thuringiensis.